The primary structure comprises 205 residues: Iron-sulfur assembly protein 2 (205 aa).

The Fe cation site is built by Cys131, Cys196, and Cys198.

It belongs to the HesB/IscA family.

It localises to the mitochondrion matrix. Involved in the assembly of mitochondrial and cytoplasmic iron-sulfur proteins. Probably involved in the binding of an intermediate of Fe/S cluster assembly. The protein is Iron-sulfur assembly protein 2 (isa2) of Schizosaccharomyces pombe (strain 972 / ATCC 24843) (Fission yeast).